Consider the following 46-residue polypeptide: Protein PsbN (46 aa).

The chain crosses the membrane as a helical span at residues 5 to 27 (TLVTLFVSGLLMSFTGYALYTAF).

This sequence belongs to the PsbN family.

The protein localises to the plastid membrane. May play a role in photosystem I and II biogenesis. This is Protein PsbN from Cuscuta obtusiflora (Peruvian dodder).